Consider the following 266-residue polypeptide: Nickel import ATP-binding protein NikE (266 aa).

The region spanning 4–252 (ISADNIVKIY…RHPASRLLRE (249 aa)) is the ABC transporter domain. 45–52 (GRSGCGKS) contributes to the ATP binding site.

This sequence belongs to the ABC transporter superfamily. Nickel importer (TC 3.A.1.5.3) family. In terms of assembly, the complex is composed of two ATP-binding proteins (NikD and NikE), two transmembrane proteins (NikB and NikC) and a solute-binding protein (NikA).

Its subcellular location is the cell inner membrane. The enzyme catalyses Ni(2+)(out) + ATP + H2O = Ni(2+)(in) + ADP + phosphate + H(+). Part of the ABC transporter complex NikABCDE involved in nickel import. Responsible for energy coupling to the transport system. The chain is Nickel import ATP-binding protein NikE from Brucella suis biovar 1 (strain 1330).